The following is a 674-amino-acid chain: MLAKPAAQFTLEEAQAEVEKLRKQLNQWRLEYYTKDAPTVTDNVYDDHYRDLQALEEAYPKLVTPDSPTQEVGDVINSDFAKVQHPIPMLSMGDVFSFEELSEWDARMQSNVGHPVDYNVELKIDGLALSLIYENGKLVQGSTRGDGNVGEDVTRNVLTIASVPKQLKQPLSLEVRGECYMPKAAFAKLNARQETEGGTPFANPRNAAAGSLRQLDAKVTAARELDTFIYTLIEPEQFNVTTQHEAIAFMQALGFTTNPSSEVAGDMQAIDTYIKKYTTDRDALPYGIDGIVLKVNDLALQAQLGNTVKVPRWEIAYKFPPEEAETVIHDIVWTVGRTGVVTPTAVMDPVQLAGTTVARATLHNADMIRDKDIRIGDTVMLHKAGDIIPEVSRVLVAKRPADTPPAPIPEVCPSCGQKLVHLDDEVALRCINPMCPAQVQEQLTHFASRNAMNIDGLGPKIVAQLQAKHLVKDVADLYHLTAADLAKLDKFKEKSINNLLSAINNSRQNSVERLIFGLGIRHVGGKAARILAEHFGDLDHLMTASQEAIADVPNIGPTIGEAIVTYFKAATVQKLITQLREADVNLRYTGPTKPVVKDSFVAGKTVVITGKFAEFSRPALTKQLEGLGAKVTGSVSKKTDILIAGDAAGSKLAKAQSLNVPIMNETELLANLKD.

NAD(+) contacts are provided by residues 42–46 (DNVYD), 91–92 (SM), and Glu-121. Lys-123 functions as the N6-AMP-lysine intermediate in the catalytic mechanism. Residues Arg-144, Glu-178, Lys-294, and Lys-318 each coordinate NAD(+). Zn(2+) is bound by residues Cys-412, Cys-415, Cys-430, and Cys-435. The 79-residue stretch at 596–674 (VKDSFVAGKT…ETELLANLKD (79 aa)) folds into the BRCT domain.

It belongs to the NAD-dependent DNA ligase family. LigA subfamily. The cofactor is Mg(2+). Mn(2+) serves as cofactor.

The enzyme catalyses NAD(+) + (deoxyribonucleotide)n-3'-hydroxyl + 5'-phospho-(deoxyribonucleotide)m = (deoxyribonucleotide)n+m + AMP + beta-nicotinamide D-nucleotide.. In terms of biological role, DNA ligase that catalyzes the formation of phosphodiester linkages between 5'-phosphoryl and 3'-hydroxyl groups in double-stranded DNA using NAD as a coenzyme and as the energy source for the reaction. It is essential for DNA replication and repair of damaged DNA. The protein is DNA ligase of Lacticaseibacillus paracasei (strain ATCC 334 / BCRC 17002 / CCUG 31169 / CIP 107868 / KCTC 3260 / NRRL B-441) (Lactobacillus paracasei).